A 249-amino-acid chain; its full sequence is Large ribosomal subunit protein uL4 (249 aa).

The protein belongs to the universal ribosomal protein uL4 family. In terms of assembly, part of the 50S ribosomal subunit.

Its function is as follows. One of the primary rRNA binding proteins, this protein initially binds near the 5'-end of the 23S rRNA. It is important during the early stages of 50S assembly. It makes multiple contacts with different domains of the 23S rRNA in the assembled 50S subunit and ribosome. In terms of biological role, forms part of the polypeptide exit tunnel. This chain is Large ribosomal subunit protein uL4, found in Methanoculleus marisnigri (strain ATCC 35101 / DSM 1498 / JR1).